The chain runs to 311 residues: 1D-myo-inositol 2-acetamido-2-deoxy-alpha-D-glucopyranoside deacetylase (311 aa).

Zn(2+) contacts are provided by histidine 29, aspartate 32, and histidine 162.

The protein belongs to the MshB deacetylase family. Zn(2+) serves as cofactor.

It catalyses the reaction 1D-myo-inositol 2-acetamido-2-deoxy-alpha-D-glucopyranoside + H2O = 1D-myo-inositol 2-amino-2-deoxy-alpha-D-glucopyranoside + acetate. In terms of biological role, catalyzes the deacetylation of 1D-myo-inositol 2-acetamido-2-deoxy-alpha-D-glucopyranoside (GlcNAc-Ins) in the mycothiol biosynthesis pathway. This Corynebacterium efficiens (strain DSM 44549 / YS-314 / AJ 12310 / JCM 11189 / NBRC 100395) protein is 1D-myo-inositol 2-acetamido-2-deoxy-alpha-D-glucopyranoside deacetylase.